Reading from the N-terminus, the 316-residue chain is Beta-ketoacyl-[acyl-carrier-protein] synthase III 1 (316 aa).

Catalysis depends on residues Cys112 and His243. The segment at 244 to 248 (QANYR) is ACP-binding. The active site involves Asn273.

Belongs to the thiolase-like superfamily. FabH family. Homodimer.

The protein localises to the cytoplasm. It catalyses the reaction malonyl-[ACP] + acetyl-CoA + H(+) = 3-oxobutanoyl-[ACP] + CO2 + CoA. It functions in the pathway lipid metabolism; fatty acid biosynthesis. Its function is as follows. Catalyzes the condensation reaction of fatty acid synthesis by the addition to an acyl acceptor of two carbons from malonyl-ACP. Catalyzes the first condensation reaction which initiates fatty acid synthesis and may therefore play a role in governing the total rate of fatty acid production. Possesses both acetoacetyl-ACP synthase and acetyl transacylase activities. Its substrate specificity determines the biosynthesis of branched-chain and/or straight-chain of fatty acids. The protein is Beta-ketoacyl-[acyl-carrier-protein] synthase III 1 of Vibrio vulnificus (strain CMCP6).